Reading from the N-terminus, the 420-residue chain is Dihydrolipoyllysine-residue succinyltransferase component of 2-oxoglutarate dehydrogenase complex (420 aa).

The 76-residue stretch at 1–76 (MAEVKVPELA…EVGQAVAVVG (76 aa)) folds into the Lipoyl-binding domain. K42 is subject to N6-lipoyllysine. The interval 75–199 (VGEGQVNTSN…IREKMSRRKK (125 aa)) is disordered. The segment covering 81–90 (NTSNDSSNES) has biased composition (polar residues). Basic and acidic residues predominate over residues 91-102 (SQKDEAKEKETP). Residues 103–127 (KQSNPNSSESENTQDNSQQRINATP) show a composition bias toward polar residues. In terms of domain architecture, Peripheral subunit-binding (PSBD) spans 124-160 (NATPSARRHARKNGVDLSEVSGKGNDVLRKDDVENSQ). A compositionally biased stretch (basic and acidic residues) spans 149 to 158 (DVLRKDDVEN). Residues 159–174 (SQKSSSQTAKSESKSQ) show a composition bias toward low complexity. The span at 175 to 186 (NSGSKQTNNNPS) shows a compositional bias: polar residues. Catalysis depends on residues H391 and D395.

It belongs to the 2-oxoacid dehydrogenase family. Forms a 24-polypeptide structural core with octahedral symmetry. Part of the 2-oxoglutarate dehydrogenase (OGDH) complex composed of E1 (2-oxoglutarate dehydrogenase), E2 (dihydrolipoamide succinyltransferase) and E3 (dihydrolipoamide dehydrogenase); the complex contains multiple copies of the three enzymatic components (E1, E2 and E3). (R)-lipoate serves as cofactor.

The enzyme catalyses N(6)-[(R)-dihydrolipoyl]-L-lysyl-[protein] + succinyl-CoA = N(6)-[(R)-S(8)-succinyldihydrolipoyl]-L-lysyl-[protein] + CoA. It participates in amino-acid degradation; L-lysine degradation via saccharopine pathway; glutaryl-CoA from L-lysine: step 6/6. Its function is as follows. E2 component of the 2-oxoglutarate dehydrogenase (OGDH) complex which catalyzes the second step in the conversion of 2-oxoglutarate to succinyl-CoA and CO(2). This is Dihydrolipoyllysine-residue succinyltransferase component of 2-oxoglutarate dehydrogenase complex (odhB) from Staphylococcus epidermidis (strain ATCC 35984 / DSM 28319 / BCRC 17069 / CCUG 31568 / BM 3577 / RP62A).